The primary structure comprises 623 residues: NADPH-dependent diflavin oxidoreductase 1 (623 aa).

A Flavodoxin-like domain is found at L8–W153. FMN is bound by residues S14–A19, S62–G65, and D135. An FAD-binding FR-type domain is found at K221 to P467. FAD is bound by residues R369, R399–S402, and G433–S436. Residues T475, S541–R542, K547–Q551, and D583 contribute to the NADP(+) site. W622 contributes to the FAD binding site.

The protein belongs to the NADPH-dependent diflavin oxidoreductase NDOR1 family. In the N-terminal section; belongs to the flavodoxin family. It in the C-terminal section; belongs to the flavoprotein pyridine nucleotide cytochrome reductase family. In terms of assembly, interacts with At5g18400. The cofactor is FAD. FMN serves as cofactor. In terms of tissue distribution, widely expressed.

It is found in the cytoplasm. The protein resides in the nucleus. It catalyses the reaction 2 oxidized [2Fe-2S]-[protein] + NADPH = 2 reduced [2Fe-2S]-[protein] + NADP(+) + H(+). Functionally, NADPH-dependent reductase which is a central component of the cytosolic iron-sulfur (Fe-S) protein assembly (CIA) machinery. Transfers electrons from NADPH via its FAD and FMN prosthetic groups to the [2Fe-2S] cluster of the anamorsin/DRE2 homolog, another key component of the CIA machinery. In turn, this reduced cluster provides electrons for assembly of cytosolic iron-sulfur cluster proteins. Catalyzes the NADP-dependent reduction of cytochrome c, but not cytochrome P450 in vitro. Required for embryo development. The sequence is that of NADPH-dependent diflavin oxidoreductase 1 (ATR3) from Arabidopsis thaliana (Mouse-ear cress).